A 167-amino-acid polypeptide reads, in one-letter code: G/U mismatch-specific DNA glycosylase (167 aa).

The protein belongs to the uracil-DNA glycosylase (UDG) superfamily. TDG/mug family. In terms of assembly, binds DNA as a monomer.

The protein resides in the cytoplasm. The enzyme catalyses Specifically hydrolyzes mismatched double-stranded DNA and polynucleotides, releasing free uracil.. Excises ethenocytosine and uracil, which can arise by alkylation or deamination of cytosine, respectively, from the corresponding mispairs with guanine in ds-DNA. It is capable of hydrolyzing the carbon-nitrogen bond between the sugar-phosphate backbone of the DNA and the mispaired base. The complementary strand guanine functions in substrate recognition. Required for DNA damage lesion repair in stationary-phase cells. In Pectobacterium atrosepticum (strain SCRI 1043 / ATCC BAA-672) (Erwinia carotovora subsp. atroseptica), this protein is G/U mismatch-specific DNA glycosylase.